Consider the following 143-residue polypeptide: Large ribosomal subunit protein uL15 (143 aa).

The disordered stretch occupies residues 1-56 (MQLNSIKPAAGAKHAKRRVGRGIGSGLGKTAGRGHKGQKSRAGGYHKVGFEGGQMP). Residues 21 to 31 (RGIGSGLGKTA) are compositionally biased toward gly residues.

It belongs to the universal ribosomal protein uL15 family. As to quaternary structure, part of the 50S ribosomal subunit.

In terms of biological role, binds to the 23S rRNA. The protein is Large ribosomal subunit protein uL15 of Verminephrobacter eiseniae (strain EF01-2).